Here is an 87-residue protein sequence, read N- to C-terminus: Gibberellin-regulated protein 8 (87 aa).

The signal sequence occupies residues 1 to 25 (MKLVVVQFFIISLLLTSSFSVLSSA).

Belongs to the GASA family. Six disulfide bonds may be present. Expressed in roots and developing seeds.

The protein localises to the secreted. Gibberellin-regulated protein that may function in hormonal controlled steps of development such as seed germination, flowering and seed maturation. In Arabidopsis thaliana (Mouse-ear cress), this protein is Gibberellin-regulated protein 8.